Consider the following 257-residue polypeptide: MTQHSRDTPQFYLTAPSPCPYLPDRSERKVFTHLVGEKAGELNDLLTHGGFRRSQSIAYRPACDQCRACVSVRVIAGEFRPSRNFRKVLARNADIVSQLRAATPTSEQYSIFRAYLDQRHRDGGMADMTVLDYAMMVEDSHVETRIIEYRRRGADSDINERGDLVGVALTDVLSDGLSMVYSFFEPSEQNRSLGTFMILDHISRARQLGLPYVYLGYWIEGSRKMDYKGRFMPQQRLAPTGWLRVDAKDESQHESRD.

The protein belongs to the R-transferase family. Bpt subfamily.

The protein localises to the cytoplasm. It carries out the reaction N-terminal L-glutamyl-[protein] + L-leucyl-tRNA(Leu) = N-terminal L-leucyl-L-glutamyl-[protein] + tRNA(Leu) + H(+). It catalyses the reaction N-terminal L-aspartyl-[protein] + L-leucyl-tRNA(Leu) = N-terminal L-leucyl-L-aspartyl-[protein] + tRNA(Leu) + H(+). Functionally, functions in the N-end rule pathway of protein degradation where it conjugates Leu from its aminoacyl-tRNA to the N-termini of proteins containing an N-terminal aspartate or glutamate. This chain is Aspartate/glutamate leucyltransferase, found in Nitrobacter hamburgensis (strain DSM 10229 / NCIMB 13809 / X14).